A 938-amino-acid chain; its full sequence is Glutamate receptor 3.1 (938 aa).

Positions 1–20 (MKFIFYLFSIFCCLCSCAQS) are cleaved as a signal peptide. The Extracellular segment spans residues 21 to 588 (QNISGRPDAV…GGWAFLQPFT (568 aa)). N-linked (GlcNAc...) asparagine glycosylation is found at asparagine 22, asparagine 39, asparagine 59, asparagine 340, asparagine 418, asparagine 436, and asparagine 551. Residues 589–609 (IKMWTVTGLFFLIIGTVVWML) form a helical membrane-spanning segment. Topologically, residues 610-618 (EHRINDEFR) are cytoplasmic. The chain crosses the membrane as a helical span at residues 619 to 639 (GPPAKQLITVFWFSFSTLFFA). Residues 640 to 650 (HREDTRSTLGR) are Cytoplasmic-facing. The chain crosses the membrane as a helical span at residues 651–671 (FVIIIWLFVVLIIQSSYTASL). Residues 672–830 (TSILTVQQLT…ELDQDPDRLD (159 aa)) lie on the Extracellular side of the membrane. A helical transmembrane segment spans residues 831–851 (VYSFSALFLICGLACIFALAI). Residues 852–938 (HACNLFYQYS…SGSGSTTASC (87 aa)) lie on the Cytoplasmic side of the membrane. The segment at 906 to 938 (AAKEKASGLGGSGGSMSGVSFTSSGSGSTTASC) is disordered. A compositionally biased stretch (low complexity) spans 922–938 (SGVSFTSSGSGSTTASC).

It belongs to the glutamate-gated ion channel (TC 1.A.10.1) family. May form homomultimers. In terms of tissue distribution, expressed at low levels in roots and leaves.

The protein resides in the membrane. In terms of biological role, glutamate-gated receptor that probably acts as a non-selective cation channel. Involved in root development. May regulate cell proliferation and cell death in the root apex. The chain is Glutamate receptor 3.1 (GLR3.1) from Oryza sativa subsp. japonica (Rice).